Consider the following 180-residue polypeptide: Orotate phosphoribosyltransferase (180 aa).

5-phospho-alpha-D-ribose 1-diphosphate is bound by residues arginine 95, lysine 96, lysine 99, and 121 to 129 (EDVTTTGGS). Orotate-binding residues include threonine 125 and arginine 153.

It belongs to the purine/pyrimidine phosphoribosyltransferase family. PyrE subfamily. As to quaternary structure, homodimer. It depends on Mg(2+) as a cofactor.

It catalyses the reaction orotidine 5'-phosphate + diphosphate = orotate + 5-phospho-alpha-D-ribose 1-diphosphate. It participates in pyrimidine metabolism; UMP biosynthesis via de novo pathway; UMP from orotate: step 1/2. Catalyzes the transfer of a ribosyl phosphate group from 5-phosphoribose 1-diphosphate to orotate, leading to the formation of orotidine monophosphate (OMP). In Methanothermobacter thermautotrophicus (strain ATCC 29096 / DSM 1053 / JCM 10044 / NBRC 100330 / Delta H) (Methanobacterium thermoautotrophicum), this protein is Orotate phosphoribosyltransferase.